A 115-amino-acid chain; its full sequence is MARIAGVDLPRNKRVVVALTYIYGIGEPTAKKICKDAGISEDIRTNDLTPEDQEKLRSEVDKYRVEGDLRREVSLNIKRLVEIGSYRGIRHRRGLPVRGQNTKNNARTRKGSKRK.

The disordered stretch occupies residues 92 to 115; it reads RRGLPVRGQNTKNNARTRKGSKRK. A compositionally biased stretch (basic residues) spans 106-115; sequence ARTRKGSKRK.

It belongs to the universal ribosomal protein uS13 family. Part of the 30S ribosomal subunit. Forms a loose heterodimer with protein S19. Forms two bridges to the 50S subunit in the 70S ribosome.

In terms of biological role, located at the top of the head of the 30S subunit, it contacts several helices of the 16S rRNA. In the 70S ribosome it contacts the 23S rRNA (bridge B1a) and protein L5 of the 50S subunit (bridge B1b), connecting the 2 subunits; these bridges are implicated in subunit movement. Contacts the tRNAs in the A and P-sites. The polypeptide is Small ribosomal subunit protein uS13 (Lactobacillus gasseri (strain ATCC 33323 / DSM 20243 / BCRC 14619 / CIP 102991 / JCM 1131 / KCTC 3163 / NCIMB 11718 / NCTC 13722 / AM63)).